A 313-amino-acid polypeptide reads, in one-letter code: 18S rRNA aminocarboxypropyltransferase (313 aa).

The interval 1-30 (MGKGKNKMHEPKNGRPQRGANGHSSRQNHR) is disordered. Residues S62, V110, L133, and W148 each coordinate S-adenosyl-L-methionine. Residues 215 to 228 (KETQERKSRAKEED) are compositionally biased toward basic and acidic residues. Positions 215–313 (KETQERKSRA…SYDPLGNLIR (99 aa)) are disordered. Over residues 237 to 246 (RRGNGSQSDT) the composition is skewed to polar residues. The span at 247–257 (SESEENSEQSD) shows a compositional bias: acidic residues. Residues S286 and S289 each carry the phosphoserine modification.

This sequence belongs to the TDD superfamily. TSR3 family.

The protein localises to the cytoplasm. It localises to the nucleus. It carries out the reaction an N(1)-methylpseudouridine in rRNA + S-adenosyl-L-methionine = N(1)-methyl-N(3)-[(3S)-3-amino-3-carboxypropyl]pseudouridine in rRNA + S-methyl-5'-thioadenosine + H(+). The catalysed reaction is N(1)-methylpseudouridine(1191) in yeast 18S rRNA + S-adenosyl-L-methionine = N(1)-methyl-N(3)-[(3S)-3-amino-3-carboxypropyl]pseudouridine(1191) in yeast 18S rRNA + S-methyl-5'-thioadenosine + H(+). Aminocarboxypropyltransferase that catalyzes the aminocarboxypropyl transfer on pseudouridine at position 1191 (Psi1191) in 18S rRNA. It constitutes the last step in biosynthesis of the hypermodified N1-methyl-N3-(3-amino-3-carboxypropyl) pseudouridine (m1acp3-Psi) conserved in eukaryotic 18S rRNA. Required for processing 35S pre-rRNA at site D. This Saccharomyces cerevisiae (strain ATCC 204508 / S288c) (Baker's yeast) protein is 18S rRNA aminocarboxypropyltransferase.